The chain runs to 545 residues: Chaperonin GroEL (545 aa).

Residues T30–P33, K51, D87–T91, G415, N479–A481, and D495 each bind ATP.

Belongs to the chaperonin (HSP60) family. In terms of assembly, forms a cylinder of 14 subunits composed of two heptameric rings stacked back-to-back. Interacts with the co-chaperonin GroES.

Its subcellular location is the cytoplasm. It catalyses the reaction ATP + H2O + a folded polypeptide = ADP + phosphate + an unfolded polypeptide.. In terms of biological role, together with its co-chaperonin GroES, plays an essential role in assisting protein folding. The GroEL-GroES system forms a nano-cage that allows encapsulation of the non-native substrate proteins and provides a physical environment optimized to promote and accelerate protein folding. This chain is Chaperonin GroEL, found in Cellvibrio japonicus (strain Ueda107) (Pseudomonas fluorescens subsp. cellulosa).